We begin with the raw amino-acid sequence, 2073 residues long: Putative mediator of RNA polymerase II transcription subunit 26 (2073 aa).

4 disordered regions span residues 22–94 (IERM…QSFQ), 115–146 (PQLQQQQQQQQQQQPSFNSNNNNNNNTNTYNF), 241–260 (QMQQQQIPHHQQNQQLQQQQ), and 287–334 (QQHQ…QNQQ). The segment covering 31–41 (NQSVEMDSHTF) has biased composition (polar residues). The segment covering 42–78 (NNNNNNNNNNNINNNNNINNNNNNNNNNNNNNNSINN) has biased composition (low complexity). 2 coiled-coil regions span residues 166–453 (IQQQ…QQQQ) and 674–710 (LRQQQQQQQQQQQQQQQQQQQQQQQQQQQIQIQNQTI). 2 stretches are compositionally biased toward low complexity: residues 287-314 (QQHQQHQQHQQHQQQHQQHQQQHQQHQQ) and 322-334 (QQHQQQQQPQNQQ). Disordered regions lie at residues 796 to 879 (KGNN…NNDI), 908 to 1175 (INNN…NNNI), 1215 to 1260 (NTTS…TVIN), 1403 to 1475 (NTSS…LPPK), 1489 to 1539 (KLST…SLSP), 1551 to 1571 (AAAAKKQQTQELSDSTAKSLS), 1587 to 1645 (KSQT…SKGK), 1804 to 1836 (INNNNNTHSNSPDENNTKMINDENNDPNNTGSS), 1868 to 1935 (NNNN…GYNN), and 2019 to 2073 (FNNN…QSYS). Low complexity-rich tracts occupy residues 798–870 (NNNN…NTNN) and 923–937 (SSSSNSNSSSPNIPN). Residues 938-947 (KPKKPVKSNS) are compositionally biased toward basic residues. Over residues 953–963 (LLEDNDSDSSD) the composition is skewed to acidic residues. Composition is skewed to low complexity over residues 964-977 (SSDSSDSSDSSDSS), 1027-1038 (ASTATSTTTTTT), 1047-1065 (PTSKIKPSSTIPSQPTSIT), 1073-1115 (STTS…SSSS), and 1127-1156 (KKPISTINNNTLNNNTNSSINKIASNSTST). Residues 1157 to 1166 (LGNKNLGTPS) show a composition bias toward polar residues. Composition is skewed to low complexity over residues 1215–1258 (NTTS…TTTV) and 1403–1424 (NTSSTTSSASSSSSSSISNGNN). Over residues 1425–1440 (SDKKRNRDQPITDTSK) the composition is skewed to basic and acidic residues. Low complexity-rich tracts occupy residues 1444–1465 (SSSSSSSSSSSSSSSTNARSSS), 1490–1520 (LSTPSSSSSSSSSSSSSSTTTTTTSTGSTIP), 1527–1539 (SSSSSNNNNSLSP), and 1551–1560 (AAAAKKQQTQ). Residues 1561-1571 (ELSDSTAKSLS) are compositionally biased toward polar residues. Low complexity-rich tracts occupy residues 1599-1609 (SSNVSGKSDSS) and 1804-1817 (INNNNNTHSNSPDE). Positions 1884-1930 (NNMGNMNNQFNNMNNNNNNNQFNNGYNNNNNNNNNNNNNNNNNNNNM) form a coiled coil.

Belongs to the Mediator complex subunit 26 family. As to quaternary structure, component of the Mediator complex.

It is found in the nucleus. Functionally, component of the Mediator complex, a coactivator involved in the regulated transcription of nearly all RNA polymerase II-dependent genes. Mediator functions as a bridge to convey information from gene-specific regulatory proteins to the basal RNA polymerase II transcription machinery. Mediator is recruited to promoters by direct interactions with regulatory proteins and serves as a scaffold for the assembly of a functional preinitiation complex with RNA polymerase II and the general transcription factors. This is Putative mediator of RNA polymerase II transcription subunit 26 (med26) from Dictyostelium discoideum (Social amoeba).